The sequence spans 483 residues: 3-isopropylmalate dehydratase large subunit (483 aa).

Residues Cys352, Cys412, and Cys415 each coordinate [4Fe-4S] cluster.

It belongs to the aconitase/IPM isomerase family. LeuC type 1 subfamily. As to quaternary structure, heterodimer of LeuC and LeuD. Requires [4Fe-4S] cluster as cofactor.

It carries out the reaction (2R,3S)-3-isopropylmalate = (2S)-2-isopropylmalate. It functions in the pathway amino-acid biosynthesis; L-leucine biosynthesis; L-leucine from 3-methyl-2-oxobutanoate: step 2/4. Catalyzes the isomerization between 2-isopropylmalate and 3-isopropylmalate, via the formation of 2-isopropylmaleate. The polypeptide is 3-isopropylmalate dehydratase large subunit (Paenarthrobacter aurescens (strain TC1)).